Here is a 118-residue protein sequence, read N- to C-terminus: Large ribosomal subunit protein bL19 (118 aa).

Belongs to the bacterial ribosomal protein bL19 family.

Functionally, this protein is located at the 30S-50S ribosomal subunit interface and may play a role in the structure and function of the aminoacyl-tRNA binding site. The chain is Large ribosomal subunit protein bL19 from Citrifermentans bemidjiense (strain ATCC BAA-1014 / DSM 16622 / JCM 12645 / Bem) (Geobacter bemidjiensis).